The chain runs to 208 residues: GTP cyclohydrolase-2 (208 aa).

GTP is bound at residue 49–53; it reads RLHSE. Zn(2+)-binding residues include cysteine 54, cysteine 65, and cysteine 67. Residues glutamine 70, 92-94, and threonine 114 contribute to the GTP site; that span reads EGR. Catalysis depends on aspartate 126, which acts as the Proton acceptor. Arginine 128 acts as the Nucleophile in catalysis. Positions 149 and 154 each coordinate GTP.

It belongs to the GTP cyclohydrolase II family. Zn(2+) serves as cofactor.

The catalysed reaction is GTP + 4 H2O = 2,5-diamino-6-hydroxy-4-(5-phosphoribosylamino)-pyrimidine + formate + 2 phosphate + 3 H(+). Its pathway is cofactor biosynthesis; riboflavin biosynthesis; 5-amino-6-(D-ribitylamino)uracil from GTP: step 1/4. Catalyzes the conversion of GTP to 2,5-diamino-6-ribosylamino-4(3H)-pyrimidinone 5'-phosphate (DARP), formate and pyrophosphate. This Azotobacter vinelandii (strain DJ / ATCC BAA-1303) protein is GTP cyclohydrolase-2.